The sequence spans 275 residues: tRNA-splicing endonuclease subunit SEN34 (275 aa).

Catalysis depends on residues Y209, H217, and K250.

The protein belongs to the tRNA-intron endonuclease family. In terms of assembly, heterotetramer composed of SEN2, SEN15, SEN34 and SEN54. Interacts directly with SEN15.

The protein resides in the nucleus. It is found in the endomembrane system. The protein localises to the mitochondrion outer membrane. The enzyme catalyses pretRNA = a 3'-half-tRNA molecule with a 5'-OH end + a 5'-half-tRNA molecule with a 2',3'-cyclic phosphate end + an intron with a 2',3'-cyclic phosphate and a 5'-hydroxyl terminus.. Its function is as follows. Constitutes one of the two catalytic subunit of the tRNA-splicing endonuclease complex, a complex responsible for identification and cleavage of the splice sites in pre-tRNA. It cleaves pre-tRNA at the 5'- and 3'-splice sites to release the intron. The products are an intron and two tRNA half-molecules bearing 2',3'-cyclic phosphate and 5'-OH termini. There are no conserved sequences at the splice sites, but the intron is invariably located at the same site in the gene, placing the splice sites an invariant distance from the constant structural features of the tRNA body. It probably carries the active site for 3'-splice site cleavage. This Saccharomyces cerevisiae (strain ATCC 204508 / S288c) (Baker's yeast) protein is tRNA-splicing endonuclease subunit SEN34 (SEN34).